The chain runs to 339 residues: Phenylalanine--tRNA ligase alpha subunit (339 aa).

Glu-254 serves as a coordination point for Mg(2+).

It belongs to the class-II aminoacyl-tRNA synthetase family. Phe-tRNA synthetase alpha subunit type 1 subfamily. As to quaternary structure, tetramer of two alpha and two beta subunits. Mg(2+) serves as cofactor.

It localises to the cytoplasm. The enzyme catalyses tRNA(Phe) + L-phenylalanine + ATP = L-phenylalanyl-tRNA(Phe) + AMP + diphosphate + H(+). The sequence is that of Phenylalanine--tRNA ligase alpha subunit from Clostridium acetobutylicum (strain ATCC 824 / DSM 792 / JCM 1419 / IAM 19013 / LMG 5710 / NBRC 13948 / NRRL B-527 / VKM B-1787 / 2291 / W).